Reading from the N-terminus, the 87-residue chain is Translation initiation factor IF-1 2 (87 aa).

The S1-like domain occupies 1-72 (MAKEELLELD…TKGRINFRHK (72 aa)).

This sequence belongs to the IF-1 family. In terms of assembly, component of the 30S ribosomal translation pre-initiation complex which assembles on the 30S ribosome in the order IF-2 and IF-3, IF-1 and N-formylmethionyl-tRNA(fMet); mRNA recruitment can occur at any time during PIC assembly.

Its subcellular location is the cytoplasm. In terms of biological role, one of the essential components for the initiation of protein synthesis. Stabilizes the binding of IF-2 and IF-3 on the 30S subunit to which N-formylmethionyl-tRNA(fMet) subsequently binds. Helps modulate mRNA selection, yielding the 30S pre-initiation complex (PIC). Upon addition of the 50S ribosomal subunit IF-1, IF-2 and IF-3 are released leaving the mature 70S translation initiation complex. This Burkholderia ambifaria (strain ATCC BAA-244 / DSM 16087 / CCUG 44356 / LMG 19182 / AMMD) (Burkholderia cepacia (strain AMMD)) protein is Translation initiation factor IF-1 2.